A 145-amino-acid chain; its full sequence is Putative pre-16S rRNA nuclease (145 aa).

The protein belongs to the YqgF nuclease family.

It localises to the cytoplasm. Its function is as follows. Could be a nuclease involved in processing of the 5'-end of pre-16S rRNA. The protein is Putative pre-16S rRNA nuclease of Thiobacillus denitrificans (strain ATCC 25259 / T1).